Here is a 1390-residue protein sequence, read N- to C-terminus: DNA-directed RNA polymerase subunit beta (1390 aa).

This sequence belongs to the RNA polymerase beta chain family. As to quaternary structure, the RNAP catalytic core consists of 2 alpha, 1 beta, 1 beta' and 1 omega subunit. When a sigma factor is associated with the core the holoenzyme is formed, which can initiate transcription.

It catalyses the reaction RNA(n) + a ribonucleoside 5'-triphosphate = RNA(n+1) + diphosphate. DNA-dependent RNA polymerase catalyzes the transcription of DNA into RNA using the four ribonucleoside triphosphates as substrates. The polypeptide is DNA-directed RNA polymerase subunit beta (Chromobacterium violaceum (strain ATCC 12472 / DSM 30191 / JCM 1249 / CCUG 213 / NBRC 12614 / NCIMB 9131 / NCTC 9757 / MK)).